The primary structure comprises 507 residues: 25-hydroxyvitamin D-1 alpha hydroxylase, mitochondrial (507 aa).

Cys-454 serves as a coordination point for heme.

Belongs to the cytochrome P450 family. Requires heme as cofactor. As to expression, kidney.

The protein resides in the mitochondrion membrane. The catalysed reaction is calcidiol + 2 reduced [adrenodoxin] + O2 + 2 H(+) = calcitriol + 2 oxidized [adrenodoxin] + H2O. It catalyses the reaction secalciferol + 2 reduced [adrenodoxin] + O2 + 2 H(+) = calcitetrol + 2 oxidized [adrenodoxin] + H2O. The enzyme catalyses 25-hydroxy-24-oxocalciol + 2 reduced [adrenodoxin] + O2 + 2 H(+) = (1S)-1,25-dihydroxy-24-oxocalciol + 2 oxidized [adrenodoxin] + H2O. It carries out the reaction 25-hydroxyvitamin D2 + 2 reduced [adrenodoxin] + O2 + 2 H(+) = 1alpha,25-dihydroxyvitamin D2 + 2 oxidized [adrenodoxin] + H2O. It participates in hormone biosynthesis; vitamin D biosynthesis. Its activity is regulated as follows. Activated by cardiolipin and dioleoyl phosphatidylethanolamine (DOPE), phospholipids found in the inner mitochondrial membrane. Inhibited by high substrate concentration. Its function is as follows. A cytochrome P450 monooxygenase involved in vitamin D metabolism and in calcium and phosphorus homeostasis. Catalyzes the rate-limiting step in the activation of vitamin D in the kidney, namely the hydroxylation of 25-hydroxyvitamin D3/calcidiol at the C1-alpha position to form the hormonally active form of vitamin D3, 1alpha,25-dihydroxyvitamin D3/calcitriol that acts via the vitamin D receptor (VDR). Has 1-alpha-hydroxylase activity on vitamin D intermediates of the CYP24A1-mediated inactivation pathway. Converts 24R,25-dihydroxyvitamin D3/secalciferol to 1-alpha,24,25-trihydroxyvitamin D3, an active ligand of VDR. Also active on 25-hydroxyvitamin D2. Mechanistically, uses molecular oxygen inserting one oxygen atom into a substrate, and reducing the second into a water molecule, with two electrons provided by NADPH via FDXR/adrenodoxin reductase and FDX1/adrenodoxin. The protein is 25-hydroxyvitamin D-1 alpha hydroxylase, mitochondrial (Cyp27b1) of Mus musculus (Mouse).